The following is a 362-amino-acid chain: Cobalt-precorrin-5B C(1)-methyltransferase (362 aa).

Belongs to the CbiD family.

It catalyses the reaction Co-precorrin-5B + S-adenosyl-L-methionine = Co-precorrin-6A + S-adenosyl-L-homocysteine. Its pathway is cofactor biosynthesis; adenosylcobalamin biosynthesis; cob(II)yrinate a,c-diamide from sirohydrochlorin (anaerobic route): step 6/10. Catalyzes the methylation of C-1 in cobalt-precorrin-5B to form cobalt-precorrin-6A. This is Cobalt-precorrin-5B C(1)-methyltransferase from Geobacter sulfurreducens (strain ATCC 51573 / DSM 12127 / PCA).